A 200-amino-acid chain; its full sequence is Protein GrpE (200 aa).

The segment at 15–47 is disordered; sequence DLEMDLNEEELEESEVNEDKEFEELDKSEEENE. Residues 16–47 are compositionally biased toward acidic residues; that stretch reads LEMDLNEEELEESEVNEDKEFEELDKSEEENE.

Belongs to the GrpE family. As to quaternary structure, homodimer.

It is found in the cytoplasm. Functionally, participates actively in the response to hyperosmotic and heat shock by preventing the aggregation of stress-denatured proteins, in association with DnaK and GrpE. It is the nucleotide exchange factor for DnaK and may function as a thermosensor. Unfolded proteins bind initially to DnaJ; upon interaction with the DnaJ-bound protein, DnaK hydrolyzes its bound ATP, resulting in the formation of a stable complex. GrpE releases ADP from DnaK; ATP binding to DnaK triggers the release of the substrate protein, thus completing the reaction cycle. Several rounds of ATP-dependent interactions between DnaJ, DnaK and GrpE are required for fully efficient folding. This Clostridium tetani (strain Massachusetts / E88) protein is Protein GrpE.